Reading from the N-terminus, the 499-residue chain is Aspartyl/glutamyl-tRNA(Asn/Gln) amidotransferase subunit B (499 aa).

It belongs to the GatB/GatE family. GatB subfamily. As to quaternary structure, heterotrimer of A, B and C subunits.

The catalysed reaction is L-glutamyl-tRNA(Gln) + L-glutamine + ATP + H2O = L-glutaminyl-tRNA(Gln) + L-glutamate + ADP + phosphate + H(+). It carries out the reaction L-aspartyl-tRNA(Asn) + L-glutamine + ATP + H2O = L-asparaginyl-tRNA(Asn) + L-glutamate + ADP + phosphate + 2 H(+). Its function is as follows. Allows the formation of correctly charged Asn-tRNA(Asn) or Gln-tRNA(Gln) through the transamidation of misacylated Asp-tRNA(Asn) or Glu-tRNA(Gln) in organisms which lack either or both of asparaginyl-tRNA or glutaminyl-tRNA synthetases. The reaction takes place in the presence of glutamine and ATP through an activated phospho-Asp-tRNA(Asn) or phospho-Glu-tRNA(Gln). This chain is Aspartyl/glutamyl-tRNA(Asn/Gln) amidotransferase subunit B, found in Mesorhizobium japonicum (strain LMG 29417 / CECT 9101 / MAFF 303099) (Mesorhizobium loti (strain MAFF 303099)).